A 145-amino-acid polypeptide reads, in one-letter code: D-aminoacyl-tRNA deacylase (145 aa).

Residues 137–138 carry the Gly-cisPro motif, important for rejection of L-amino acids motif; sequence GP.

The protein belongs to the DTD family. In terms of assembly, homodimer.

The protein localises to the cytoplasm. The catalysed reaction is glycyl-tRNA(Ala) + H2O = tRNA(Ala) + glycine + H(+). It carries out the reaction a D-aminoacyl-tRNA + H2O = a tRNA + a D-alpha-amino acid + H(+). An aminoacyl-tRNA editing enzyme that deacylates mischarged D-aminoacyl-tRNAs. Also deacylates mischarged glycyl-tRNA(Ala), protecting cells against glycine mischarging by AlaRS. Acts via tRNA-based rather than protein-based catalysis; rejects L-amino acids rather than detecting D-amino acids in the active site. By recycling D-aminoacyl-tRNA to D-amino acids and free tRNA molecules, this enzyme counteracts the toxicity associated with the formation of D-aminoacyl-tRNA entities in vivo and helps enforce protein L-homochirality. The sequence is that of D-aminoacyl-tRNA deacylase from Exiguobacterium sibiricum (strain DSM 17290 / CCUG 55495 / CIP 109462 / JCM 13490 / 255-15).